Reading from the N-terminus, the 267-residue chain is Corrinoid adenosyltransferase EutT (267 aa).

Positions 80 and 83 each coordinate a divalent metal cation.

The protein belongs to the Cob(I)alamin adenosyltransferase family. EutT subfamily. Homodimer. The cofactor is a divalent metal cation.

It is found in the bacterial microcompartment. It catalyses the reaction 2 cob(II)alamin + reduced [electron-transfer flavoprotein] + 2 ATP + 2 H2O = 2 adenosylcob(III)alamin + oxidized [electron-transfer flavoprotein] + 2 phosphate + 2 diphosphate + 3 H(+). The enzyme catalyses 2 cob(II)inamide + reduced [electron-transfer flavoprotein] + 2 ATP + 2 H2O = 2 adenosylcob(III)inamide + oxidized [electron-transfer flavoprotein] + 2 phosphate + 2 diphosphate + 3 H(+). Its pathway is amine and polyamine degradation; ethanolamine degradation. Its function is as follows. Converts cyanocobalamin (CN-B12) to adenosylcobalamin (AdoCbl), the inducer of the eut operon. Is not active on cobinamide nor other intermediates in the adenosylcobalamin synthetic pathway. Allows full induction of the eut operon. Can use ADP, CTP and dATP in place of ATP, and cobinamide in place of cobalamin, none are as efficiently used as ATP and cobalamin. In terms of biological role, expression of the eut operon allows this bacteria to use ethanolamine (EA) as a carbon, nitrogen and energy source. It relies on cobalamin (vitamin B12) both as a cofactor for the ethanolamine ammonia-lyase (EAL) activity and to induce the operon. EA enhances bacterial survival in macrophages in a concentration-dependent manner, suggesting it is an important nutrient during infection. In Salmonella typhimurium (strain LT2 / SGSC1412 / ATCC 700720), this protein is Corrinoid adenosyltransferase EutT.